Reading from the N-terminus, the 474-residue chain is tRNA (guanine(37)-N(1))-methyltransferase (474 aa).

S-adenosyl-L-methionine contacts are provided by residues His234, 274–275, 303–304, and Asn345; these read DL and DA. Positions 452 to 464 are enriched in acidic residues; that stretch reads EPEAQCESEEAEE. The tract at residues 452-474 is disordered; sequence EPEAQCESEEAEEPSSKRIKVDT. The segment covering 465 to 474 has biased composition (basic and acidic residues); sequence PSSKRIKVDT.

It belongs to the class I-like SAM-binding methyltransferase superfamily. TRM5/TYW2 family. In terms of assembly, monomer.

The protein localises to the mitochondrion matrix. The protein resides in the nucleus. Its subcellular location is the cytoplasm. The catalysed reaction is guanosine(37) in tRNA + S-adenosyl-L-methionine = N(1)-methylguanosine(37) in tRNA + S-adenosyl-L-homocysteine + H(+). In terms of biological role, specifically methylates the N1 position of guanosine-37 in various cytoplasmic and mitochondrial tRNAs. Methylation is not dependent on the nature of the nucleoside 5' of the target nucleoside. This is the first step in the biosynthesis of wybutosine (yW), a modified base adjacent to the anticodon of tRNAs and required for accurate decoding. The sequence is that of tRNA (guanine(37)-N(1))-methyltransferase from Caenorhabditis elegans.